A 319-amino-acid chain; its full sequence is MFKKWSGLFVIAACFLLVAACGNSSTKGSADSKGDKLHVVTTFYPMYEFTKQIVKDKGDVDLLIPSSVEPHDWEPTPKDIANIQDADLFVYNSEYMETWVPSAEKSMGQGHAVFVNASKGIDLMEGSEEEHEEHDHGEHEHSHAMDPHVWLSPVLAQKEVKNITAQIVKQDPDNKEYYEKNSKEYIAKLQDLDKLYRTTAKKAEKKEFITQHTAFGYLAKEYGLKQVPIAGLSPDQEPSAASLAKLKTYAKEHNVKVIYFEEIASSKVADTLASEIGAKTEVLNTLEGLSKEEQDKGLGYIDIMKQNLDALKDSLLVKS.

Residues 1 to 20 (MFKKWSGLFVIAACFLLVAA) form the signal peptide. The N-palmitoyl cysteine moiety is linked to residue Cys21. Cys21 is lipidated: S-diacylglycerol cysteine. Residues His71, His148, His212, and Glu287 each contribute to the Zn(2+) site.

It belongs to the bacterial solute-binding protein 9 family. The complex is composed of two ATP-binding proteins (ZnuC), two transmembrane proteins (ZnuB) and a solute-binding protein (ZnuA).

The protein localises to the cell membrane. It localises to the membrane raft. Its function is as follows. Part of the ATP-binding cassette (ABC) transport system ZnuABC involved in zinc import. Binds zinc with high affinity and specificity and delivers it to the membrane permease for translocation into the cytoplasm. ZnuABC-mediated zinc transport is required for comF expression and competence development. This is High-affinity zinc uptake system protein ZnuA (znuA) from Bacillus subtilis (strain 168).